Consider the following 293-residue polypeptide: Phosphatidylglycerol--prolipoprotein diacylglyceryl transferase (293 aa).

4 helical membrane passes run 4 to 24 (ILAFLSIAAGSTLFFVFLFIF), 45 to 65 (FELRWYSTLILTGFLISYFVA), 81 to 101 (ELIFYGVIAGIVGARLYYVLF), and 115 to 135 (IWEGGLAIHGAVIGALLTGFL). Arg165 lines the a 1,2-diacyl-sn-glycero-3-phospho-(1'-sn-glycerol) pocket. 3 consecutive transmembrane segments (helical) span residues 204–224 (PTFLYESIWDLLVFFMLSVYF), 231–249 (HGEVTCLYFVLYSLGRIVI), and 262–282 (IKAAQLLSAVLILLGFTGFLI).

This sequence belongs to the Lgt family.

It is found in the cell inner membrane. It catalyses the reaction L-cysteinyl-[prolipoprotein] + a 1,2-diacyl-sn-glycero-3-phospho-(1'-sn-glycerol) = an S-1,2-diacyl-sn-glyceryl-L-cysteinyl-[prolipoprotein] + sn-glycerol 1-phosphate + H(+). The protein operates within protein modification; lipoprotein biosynthesis (diacylglyceryl transfer). Functionally, catalyzes the transfer of the diacylglyceryl group from phosphatidylglycerol to the sulfhydryl group of the N-terminal cysteine of a prolipoprotein, the first step in the formation of mature lipoproteins. The protein is Phosphatidylglycerol--prolipoprotein diacylglyceryl transferase of Thermotoga petrophila (strain ATCC BAA-488 / DSM 13995 / JCM 10881 / RKU-1).